Consider the following 164-residue polypeptide: uncharacterized protein (164 aa).

The region spanning 26–158 (YAGFWVRFWA…DYIADTTVVH (133 aa)) is the RDD domain. The next 2 membrane-spanning stretches (helical) occupy residues 35 to 55 (AFLL…SPLF) and 66 to 86 (MFTF…YFAL).

The protein localises to the cell membrane. This is an uncharacterized protein from Bacillus subtilis (strain 168).